The chain runs to 427 residues: Enolase (427 aa).

Gln-163 serves as a coordination point for (2R)-2-phosphoglycerate. Catalysis depends on Glu-205, which acts as the Proton donor. Mg(2+)-binding residues include Asp-242, Glu-285, and Asp-312. (2R)-2-phosphoglycerate-binding residues include Lys-337, Arg-366, Ser-367, and Lys-388. Lys-337 functions as the Proton acceptor in the catalytic mechanism.

It belongs to the enolase family. Mg(2+) is required as a cofactor.

It is found in the cytoplasm. Its subcellular location is the secreted. It localises to the cell surface. The catalysed reaction is (2R)-2-phosphoglycerate = phosphoenolpyruvate + H2O. It participates in carbohydrate degradation; glycolysis; pyruvate from D-glyceraldehyde 3-phosphate: step 4/5. Functionally, catalyzes the reversible conversion of 2-phosphoglycerate (2-PG) into phosphoenolpyruvate (PEP). It is essential for the degradation of carbohydrates via glycolysis. The protein is Enolase of Burkholderia vietnamiensis (strain G4 / LMG 22486) (Burkholderia cepacia (strain R1808)).